A 505-amino-acid chain; its full sequence is ATP synthase subunit alpha (505 aa).

171–178 (GDRQTGKT) is an ATP binding site.

This sequence belongs to the ATPase alpha/beta chains family. In terms of assembly, F-type ATPases have 2 components, CF(1) - the catalytic core - and CF(0) - the membrane proton channel. CF(1) has five subunits: alpha(3), beta(3), gamma(1), delta(1), epsilon(1). CF(0) has three main subunits: a(1), b(2) and c(9-12). The alpha and beta chains form an alternating ring which encloses part of the gamma chain. CF(1) is attached to CF(0) by a central stalk formed by the gamma and epsilon chains, while a peripheral stalk is formed by the delta and b chains.

It is found in the cell inner membrane. The enzyme catalyses ATP + H2O + 4 H(+)(in) = ADP + phosphate + 5 H(+)(out). Functionally, produces ATP from ADP in the presence of a proton gradient across the membrane. The alpha chain is a regulatory subunit. This chain is ATP synthase subunit alpha, found in Campylobacter concisus (strain 13826).